The sequence spans 92 residues: Small ribosomal subunit protein uS19 (92 aa).

It belongs to the universal ribosomal protein uS19 family.

In terms of biological role, protein S19 forms a complex with S13 that binds strongly to the 16S ribosomal RNA. This chain is Small ribosomal subunit protein uS19, found in Mesorhizobium japonicum (strain LMG 29417 / CECT 9101 / MAFF 303099) (Mesorhizobium loti (strain MAFF 303099)).